We begin with the raw amino-acid sequence, 181 residues long: dTDP-4-dehydrorhamnose 3,5-epimerase (181 aa).

Residues Arg-23, Glu-28, 47-49 (QDN), and Arg-59 contribute to the substrate site. His-62 acts as the Proton acceptor in catalysis. Substrate contacts are provided by Lys-71 and His-118. Tyr-131 (proton donor) is an active-site residue. Residues Glu-142 and Lys-167 each coordinate substrate.

Belongs to the dTDP-4-dehydrorhamnose 3,5-epimerase family. Homodimer.

The catalysed reaction is dTDP-4-dehydro-6-deoxy-alpha-D-glucose = dTDP-4-dehydro-beta-L-rhamnose. The protein operates within carbohydrate biosynthesis; dTDP-L-rhamnose biosynthesis. It participates in bacterial outer membrane biogenesis; lipopolysaccharide biosynthesis. Catalyzes the epimerization of the C3' and C5'positions of dTDP-6-deoxy-D-xylo-4-hexulose, forming dTDP-6-deoxy-L-lyxo-4-hexulose. In Pseudomonas aeruginosa (strain ATCC 15692 / DSM 22644 / CIP 104116 / JCM 14847 / LMG 12228 / 1C / PRS 101 / PAO1), this protein is dTDP-4-dehydrorhamnose 3,5-epimerase (rmlC).